The following is a 313-amino-acid chain: Ribosomal protein L11 methyltransferase (313 aa).

S-adenosyl-L-methionine-binding residues include Thr-161, Gly-182, Asp-204, and Asn-247.

The protein belongs to the methyltransferase superfamily. PrmA family.

The protein localises to the cytoplasm. The enzyme catalyses L-lysyl-[protein] + 3 S-adenosyl-L-methionine = N(6),N(6),N(6)-trimethyl-L-lysyl-[protein] + 3 S-adenosyl-L-homocysteine + 3 H(+). Its function is as follows. Methylates ribosomal protein L11. In Halalkalibacterium halodurans (strain ATCC BAA-125 / DSM 18197 / FERM 7344 / JCM 9153 / C-125) (Bacillus halodurans), this protein is Ribosomal protein L11 methyltransferase.